Reading from the N-terminus, the 845-residue chain is Translation initiation factor IF-2 (845 aa).

Disordered stretches follow at residues 44 to 91 and 119 to 256; these read KRRK…NLSS and ARRA…NQEP. Residues 119–129 show a composition bias toward basic and acidic residues; that stretch reads ARRAKEREESL. The span at 139–148 shows a compositional bias: acidic residues; sequence DETPQEEEEP. Residues 156 to 165 show a composition bias toward polar residues; the sequence is SLSPAQSQIE. Composition is skewed to basic and acidic residues over residues 179–194 and 202–217; these read IEKRKADETKEDDRNS and SEVRAPKVLKGADEKR. The 168-residue stretch at 343 to 510 folds into the tr-type G domain; it reads LRPPVVTIMG…AILLQAEILD (168 aa). A G1 region spans residues 352–359; it reads GHVDHGKT. Residue 352–359 coordinates GTP; sequence GHVDHGKT. Positions 377–381 are G2; that stretch reads GITQH. A G3 region spans residues 398 to 401; it reads DTPG. GTP contacts are provided by residues 398–402 and 452–455; these read DTPGH and NKID. Residues 452–455 form a G4 region; that stretch reads NKID. Residues 488–490 are G5; the sequence is SAK.

This sequence belongs to the TRAFAC class translation factor GTPase superfamily. Classic translation factor GTPase family. IF-2 subfamily.

The protein resides in the cytoplasm. One of the essential components for the initiation of protein synthesis. Protects formylmethionyl-tRNA from spontaneous hydrolysis and promotes its binding to the 30S ribosomal subunits. Also involved in the hydrolysis of GTP during the formation of the 70S ribosomal complex. This chain is Translation initiation factor IF-2, found in Bartonella henselae (strain ATCC 49882 / DSM 28221 / CCUG 30454 / Houston 1) (Rochalimaea henselae).